The sequence spans 258 residues: Phosphate import ATP-binding protein PstB 2 (258 aa).

An ABC transporter domain is found at 12-253; it reads IQVRDLNFYY…PQQKQTEDYI (242 aa). An ATP-binding site is contributed by 44 to 51; the sequence is GPSGCGKS.

Belongs to the ABC transporter superfamily. Phosphate importer (TC 3.A.1.7) family. In terms of assembly, the complex is composed of two ATP-binding proteins (PstB), two transmembrane proteins (PstC and PstA) and a solute-binding protein (PstS).

It is found in the cell inner membrane. The catalysed reaction is phosphate(out) + ATP + H2O = ADP + 2 phosphate(in) + H(+). Part of the ABC transporter complex PstSACB involved in phosphate import. Responsible for energy coupling to the transport system. This chain is Phosphate import ATP-binding protein PstB 2, found in Yersinia pestis bv. Antiqua (strain Nepal516).